The primary structure comprises 78 residues: Acyl carrier protein (78 aa).

Positions 2-77 (STIEERVKKI…AAIDYILSHQ (76 aa)) constitute a Carrier domain. An O-(pantetheine 4'-phosphoryl)serine modification is found at serine 37.

Belongs to the acyl carrier protein (ACP) family. 4'-phosphopantetheine is transferred from CoA to a specific serine of apo-ACP by AcpS. This modification is essential for activity because fatty acids are bound in thioester linkage to the sulfhydryl of the prosthetic group.

Its subcellular location is the cytoplasm. The protein operates within lipid metabolism; fatty acid biosynthesis. In terms of biological role, carrier of the growing fatty acid chain in fatty acid biosynthesis. The chain is Acyl carrier protein from Tolumonas auensis (strain DSM 9187 / NBRC 110442 / TA 4).